A 292-amino-acid chain; its full sequence is Sulfhydrogenase 1 subunit gamma (292 aa).

Positions Y15–V115 constitute an FAD-binding FR-type domain. [2Fe-2S] cluster is bound by residues C253, C258, C261, and C273.

Heterotetramer of alpha, beta, gamma and delta subunits. The nickel-containing alpha and delta subunits constitute the hydrogenase activity. The beta and gamma subunits (flavin-containing dimer) constitute the sulfur reductase activity. It depends on FAD as a cofactor. [2Fe-2S] cluster is required as a cofactor.

It localises to the cytoplasm. The catalysed reaction is n sulfur + H2 = (n-1) sulfur + hydrogen sulfide + H(+). With respect to regulation, stimulated by rubredoxin at pH 7.6 but not ferredoxin. In terms of biological role, part of a bifunctional enzyme complex that functions as an NADPH-dependent hydrogen-evolving hydrogenase with sulfur reducing activity. May play a role in hydrogen cycling during fermentative growth. Activity not exhibited with NAD. The beta and gamma subunits form the sulfur reducing component that catalyzes the cytoplasmic production of hydrogen sulfide in the presence of elemental sulfur. Not active in the presence of sodium sulfate, sodium sulfite, sodium thiosulfate or cysteine. This Pyrococcus furiosus (strain ATCC 43587 / DSM 3638 / JCM 8422 / Vc1) protein is Sulfhydrogenase 1 subunit gamma.